The primary structure comprises 212 residues: Large ribosomal subunit protein uL3 (212 aa).

An N5-methylglutamine modification is found at glutamine 153.

This sequence belongs to the universal ribosomal protein uL3 family. In terms of assembly, part of the 50S ribosomal subunit. Forms a cluster with proteins L14 and L19. Post-translationally, methylated by PrmB.

In terms of biological role, one of the primary rRNA binding proteins, it binds directly near the 3'-end of the 23S rRNA, where it nucleates assembly of the 50S subunit. The chain is Large ribosomal subunit protein uL3 from Shewanella frigidimarina (strain NCIMB 400).